The following is a 650-amino-acid chain: Pentatricopeptide repeat-containing protein At1g51965, mitochondrial (650 aa).

The N-terminal 23 residues, 1–23, are a transit peptide targeting the mitochondrion; it reads MKLLRRRFFNSVNTITRPNRRHY. 14 PPR repeats span residues 132 to 169, 170 to 200, 202 to 236, 237 to 267, 269 to 303, 304 to 338, 339 to 369, 371 to 405, 406 to 440, 441 to 475, 476 to 510, 511 to 545, 546 to 580, and 581 to 615; these read DPFL…NVHG, NIST…WDLK, NSFT…GHKL, DIFA…RHCR, DEYT…GLTL, NVVG…GCRP, NEYT…SKRY, TQGI…PVKG, ERDS…GVVT, DTMM…GPSP, DIFT…DCKP, DIIS…GLNP, DVVT…GCQP, and NIVT…GLTP.

It belongs to the PPR family. P subfamily.

It is found in the mitochondrion. This chain is Pentatricopeptide repeat-containing protein At1g51965, mitochondrial, found in Arabidopsis thaliana (Mouse-ear cress).